The chain runs to 176 residues: V-type proton ATPase 16 kDa proteolipid subunit (176 aa).

Residues methionine 1 to proline 17 are Lumenal-facing. A helical membrane pass occupies residues phenylalanine 18–glycine 38. The Cytoplasmic segment spans residues threonine 39 to phenylalanine 62. The chain crosses the membrane as a helical span at residues proline 63–isoleucine 83. Residues asparagine 84 to aspartate 98 are Lumenal-facing. The chain crosses the membrane as a helical span at residues leucine 99 to serine 119. At glycine 120–serine 136 the chain is on the cytoplasmic side. A helical membrane pass occupies residues methionine 137–isoleucine 157. Topologically, residues methionine 158–serine 176 are lumenal.

It belongs to the V-ATPase proteolipid subunit family. As to quaternary structure, V-ATPase is a heteromultimeric enzyme composed of a peripheral catalytic V1 complex (main components: subunits A, B, C, D, E, and F) attached to an integral membrane V0 proton pore complex (main component: the proteolipid protein; which is present as a hexamer that forms the proton-conducting pore).

Its subcellular location is the vacuole membrane. In terms of biological role, proton-conducting pore forming subunit of the membrane integral V0 complex of vacuolar ATPase. V-ATPase is responsible for acidifying a variety of intracellular compartments in eukaryotic cells. This Entamoeba dispar protein is V-type proton ATPase 16 kDa proteolipid subunit (VMA3).